The following is a 391-amino-acid chain: 1-deoxy-D-xylulose 5-phosphate reductoisomerase (391 aa).

T17, G18, S19, I20, N47, and N130 together coordinate NADPH. K131 is a binding site for 1-deoxy-D-xylulose 5-phosphate. An NADPH-binding site is contributed by E132. D156 is a Mn(2+) binding site. 1-deoxy-D-xylulose 5-phosphate-binding residues include S157, E158, S182, and H205. E158 is a binding site for Mn(2+). NADPH is bound at residue G211. 4 residues coordinate 1-deoxy-D-xylulose 5-phosphate: S218, N223, K224, and E227. Mn(2+) is bound at residue E227.

It belongs to the DXR family. Mg(2+) serves as cofactor. Mn(2+) is required as a cofactor.

It carries out the reaction 2-C-methyl-D-erythritol 4-phosphate + NADP(+) = 1-deoxy-D-xylulose 5-phosphate + NADPH + H(+). It functions in the pathway isoprenoid biosynthesis; isopentenyl diphosphate biosynthesis via DXP pathway; isopentenyl diphosphate from 1-deoxy-D-xylulose 5-phosphate: step 1/6. Functionally, catalyzes the NADPH-dependent rearrangement and reduction of 1-deoxy-D-xylulose-5-phosphate (DXP) to 2-C-methyl-D-erythritol 4-phosphate (MEP). This is 1-deoxy-D-xylulose 5-phosphate reductoisomerase from Sinorhizobium medicae (strain WSM419) (Ensifer medicae).